We begin with the raw amino-acid sequence, 388 residues long: Formate-dependent phosphoribosylglycinamide formyltransferase (388 aa).

N(1)-(5-phospho-beta-D-ribosyl)glycinamide contacts are provided by residues 21-22 (EL) and E81. Residues R113, K154, 159-164 (SSGHGQ), 193-196 (EEFI), and E201 each bind ATP. Residues 118-306 (KFAAEELGLK…EFALHVRAVL (189 aa)) form the ATP-grasp domain. Mg(2+) contacts are provided by E265 and E277. N(1)-(5-phospho-beta-D-ribosyl)glycinamide is bound by residues D284, K352, and 359 to 360 (RR).

This sequence belongs to the PurK/PurT family. As to quaternary structure, homodimer.

The catalysed reaction is N(1)-(5-phospho-beta-D-ribosyl)glycinamide + formate + ATP = N(2)-formyl-N(1)-(5-phospho-beta-D-ribosyl)glycinamide + ADP + phosphate + H(+). It functions in the pathway purine metabolism; IMP biosynthesis via de novo pathway; N(2)-formyl-N(1)-(5-phospho-D-ribosyl)glycinamide from N(1)-(5-phospho-D-ribosyl)glycinamide (formate route): step 1/1. Functionally, involved in the de novo purine biosynthesis. Catalyzes the transfer of formate to 5-phospho-ribosyl-glycinamide (GAR), producing 5-phospho-ribosyl-N-formylglycinamide (FGAR). Formate is provided by PurU via hydrolysis of 10-formyl-tetrahydrofolate. This is Formate-dependent phosphoribosylglycinamide formyltransferase from Nitratiruptor sp. (strain SB155-2).